The primary structure comprises 458 residues: tRNA modification GTPase MnmE (458 aa).

(6S)-5-formyl-5,6,7,8-tetrahydrofolate is bound by residues arginine 22, glutamate 84, and arginine 123. The region spanning 220-379 (GIATAIIGRP…LEKAIADLFF (160 aa)) is the TrmE-type G domain. A K(+)-binding site is contributed by asparagine 230. GTP contacts are provided by residues 230-235 (NVGKSS), 249-255 (TDIAGTT), and 274-277 (DTAG). Serine 234 contacts Mg(2+). Residues threonine 249, isoleucine 251, and threonine 254 each contribute to the K(+) site. Threonine 255 contacts Mg(2+). Lysine 458 is a (6S)-5-formyl-5,6,7,8-tetrahydrofolate binding site.

This sequence belongs to the TRAFAC class TrmE-Era-EngA-EngB-Septin-like GTPase superfamily. TrmE GTPase family. Homodimer. Heterotetramer of two MnmE and two MnmG subunits. The cofactor is K(+).

It is found in the cytoplasm. Its function is as follows. Exhibits a very high intrinsic GTPase hydrolysis rate. Involved in the addition of a carboxymethylaminomethyl (cmnm) group at the wobble position (U34) of certain tRNAs, forming tRNA-cmnm(5)s(2)U34. The chain is tRNA modification GTPase MnmE from Bacillus cereus (strain ATCC 14579 / DSM 31 / CCUG 7414 / JCM 2152 / NBRC 15305 / NCIMB 9373 / NCTC 2599 / NRRL B-3711).